A 187-amino-acid polypeptide reads, in one-letter code: CASP-like protein 3A2 (187 aa).

Residues 1–24 lie on the Cytoplasmic side of the membrane; that stretch reads MTSNGEGGEVVAKRRRKGIKELVQ. Residues 25-45 traverse the membrane as a helical segment; it reads VALRGGCLAASATAMAVMLTA. The Extracellular portion of the chain corresponds to 46–71; the sequence is TEEGVADIYGFKLTLSSNWSFSPSYQ. N-linked (GlcNAc...) asparagine glycosylation is present at asparagine 63. Residues 72–92 traverse the membrane as a helical segment; it reads YVVGACAGTVLYSLLQLCLGV. The Cytoplasmic portion of the chain corresponds to 93–107; sequence YRLVTGSPITPSRFQ. A helical transmembrane segment spans residues 108–128; it reads AWLCFTSDQLFCYLMMSAGSA. Residues 129–162 lie on the Extracellular side of the membrane; it reads GSGVTNLNKTGIRHTPLPDFCKTLSSFCNHVALS. Residue asparagine 136 is glycosylated (N-linked (GlcNAc...) asparagine). The chain crosses the membrane as a helical span at residues 163–183; that stretch reads LLLVFLSFIFLASSSFFTVLV. The Cytoplasmic segment spans residues 184–187; that stretch reads LSTP.

Belongs to the Casparian strip membrane proteins (CASP) family. Homodimer and heterodimers.

It localises to the cell membrane. This is CASP-like protein 3A2 from Arabidopsis thaliana (Mouse-ear cress).